The sequence spans 602 residues: NAD-dependent protein deacetylase sir-2.1 (602 aa).

Positions 25–57 (PEIETMHIENSVEGESGRQRTESTASVNSESWQ) are disordered. The segment covering 46-57 (ESTASVNSESWQ) has biased composition (polar residues). The region spanning 119-374 (KLFTYNSLSD…RDICYALGGS (256 aa)) is the Deacetylase sirtuin-type domain. NAD(+) contacts are provided by residues 144 to 163 (GAGV…DGIY) and 228 to 231 (QNID). Histidine 246 (proton acceptor) is an active-site residue. Residues cysteine 254, cysteine 257, cysteine 278, and cysteine 281 each coordinate Zn(2+). Residues 318–320 (GSS), 343–345 (NRE), and cysteine 360 each bind NAD(+). Disordered regions lie at residues 411–468 (QERR…SDEV) and 520–551 (RNRH…RSQS).

This sequence belongs to the sirtuin family. Class I subfamily. In terms of assembly, interacts with ftt-2 and par-5. Interacts with daf-16 following heat-shock, which causes daf-16 to accumulate in the nucleus. Interaction with daf-16 is promoted by ftt-2. It depends on Zn(2+) as a cofactor.

It localises to the nucleus. It carries out the reaction N(6)-acetyl-L-lysyl-[protein] + NAD(+) + H2O = 2''-O-acetyl-ADP-D-ribose + nicotinamide + L-lysyl-[protein]. NAD-dependent deacetylase. Required for a reduction of the 'Lys-16' acetylation of histone H4 (H4K16ac) on dosage-compensated X chromosomes in hermaphrodites. Functions upstream of daf-16 in the insulin-like signaling pathway, promoting daf-16 mediated transcriptional activation and increased life-span. May also regulate life-span independently of daf-16 by modulating the transcription of genes involved in the stress response of the endoplasmic reticulum (ER). Acts upstream of the nicotinic acid metabolism pathway, which may be linked to the regulation of longevity. Plays a role in ascaroside-mediated longevity and stress resistance. The sequence is that of NAD-dependent protein deacetylase sir-2.1 (sir-2.1) from Caenorhabditis briggsae.